The sequence spans 192 residues: 3-isopropylmalate dehydratase small subunit (192 aa).

Belongs to the LeuD family. LeuD type 1 subfamily. As to quaternary structure, heterodimer of LeuC and LeuD.

The catalysed reaction is (2R,3S)-3-isopropylmalate = (2S)-2-isopropylmalate. It functions in the pathway amino-acid biosynthesis; L-leucine biosynthesis; L-leucine from 3-methyl-2-oxobutanoate: step 2/4. Catalyzes the isomerization between 2-isopropylmalate and 3-isopropylmalate, via the formation of 2-isopropylmaleate. The sequence is that of 3-isopropylmalate dehydratase small subunit from Oceanobacillus iheyensis (strain DSM 14371 / CIP 107618 / JCM 11309 / KCTC 3954 / HTE831).